The primary structure comprises 431 residues: 4-hydroxy-3-methylbut-2-en-1-yl diphosphate synthase (flavodoxin) (431 aa).

The tract at residues 1 to 21 (MNKLENPSQRDVAGPSPRHKT) is disordered. [4Fe-4S] cluster is bound by residues cysteine 310, cysteine 313, cysteine 356, and glutamate 363.

It belongs to the IspG family. It depends on [4Fe-4S] cluster as a cofactor.

It catalyses the reaction (2E)-4-hydroxy-3-methylbut-2-enyl diphosphate + oxidized [flavodoxin] + H2O + 2 H(+) = 2-C-methyl-D-erythritol 2,4-cyclic diphosphate + reduced [flavodoxin]. It participates in isoprenoid biosynthesis; isopentenyl diphosphate biosynthesis via DXP pathway; isopentenyl diphosphate from 1-deoxy-D-xylulose 5-phosphate: step 5/6. In terms of biological role, converts 2C-methyl-D-erythritol 2,4-cyclodiphosphate (ME-2,4cPP) into 1-hydroxy-2-methyl-2-(E)-butenyl 4-diphosphate. The protein is 4-hydroxy-3-methylbut-2-en-1-yl diphosphate synthase (flavodoxin) of Nitrobacter hamburgensis (strain DSM 10229 / NCIMB 13809 / X14).